We begin with the raw amino-acid sequence, 253 residues long: Large ribosomal subunit protein uL4 (253 aa).

The segment at 61–107 (GWGSGRGTSHVPRLVNSSRAARVPHARGGRRAHPPKPEADRSEKVNT) is disordered. The span at 82–94 (RVPHARGGRRAHP) shows a compositional bias: basic residues. Over residues 95-107 (PKPEADRSEKVNT) the composition is skewed to basic and acidic residues.

Belongs to the universal ribosomal protein uL4 family. As to quaternary structure, part of the 50S ribosomal subunit.

Its function is as follows. One of the primary rRNA binding proteins, this protein initially binds near the 5'-end of the 23S rRNA. It is important during the early stages of 50S assembly. It makes multiple contacts with different domains of the 23S rRNA in the assembled 50S subunit and ribosome. In terms of biological role, forms part of the polypeptide exit tunnel. This is Large ribosomal subunit protein uL4 from Methanosarcina barkeri (strain Fusaro / DSM 804).